Here is a 453-residue protein sequence, read N- to C-terminus: MINKIMKKYETIYALATAPYNSAIHVIRLSGPDAFEIINKICDKQITKEGYRIQNARIVDNDQIIDDVLLMKFVAPKSFTGEDSIEINCHGGLFVINKIMALLNKHGAHLARRGEFSKRSYINKKIDLNQATAIHDLIFAKNNLSHSASIKALSGEFSKDIKNIQQEIFRLIGLVEIAIDYPEYEDEKKELTEEFKNLTNIRQKLQRIVNKSLKLKQISEGIKIAIVGEPNAGKSSLLNALLNEQKAIVTNIPGTTRDTVEGQIVLNDELIINLIDTAGIRKSSDQIEQIGINKSFKTIDKSDLVIYLIDLNKYQNYDKTNIYKYLINKKKQFVLVGNKVDEVDPTLNTGEIQIKISAKNNDISDLIKYLEETSLAIFNDENKQDSIFQEEWQINLLQTALYNINLILNDPNQYHDLVIQHLNEANNSLLKVLSEYEDYNLIDEIFKNFCLGK.

3 residues coordinate (6S)-5-formyl-5,6,7,8-tetrahydrofolate: arginine 28, glutamate 86, and lysine 125. In terms of domain architecture, TrmE-type G spans 221 to 375; sequence GIKIAIVGEP…LIKYLEETSL (155 aa). Asparagine 231 contacts K(+). Residues 231 to 236, 250 to 256, and 276 to 279 each bind GTP; these read NAGKSS, TNIPGTT, and DTAG. Residue serine 235 coordinates Mg(2+). K(+) contacts are provided by threonine 250, isoleucine 252, and threonine 255. Threonine 256 is a binding site for Mg(2+). Lysine 453 provides a ligand contact to (6S)-5-formyl-5,6,7,8-tetrahydrofolate.

The protein belongs to the TRAFAC class TrmE-Era-EngA-EngB-Septin-like GTPase superfamily. TrmE GTPase family. Homodimer. Heterotetramer of two MnmE and two MnmG subunits. The cofactor is K(+).

Its subcellular location is the cytoplasm. Exhibits a very high intrinsic GTPase hydrolysis rate. Involved in the addition of a carboxymethylaminomethyl (cmnm) group at the wobble position (U34) of certain tRNAs, forming tRNA-cmnm(5)s(2)U34. The chain is tRNA modification GTPase MnmE from Mycoplasmoides gallisepticum (strain R(low / passage 15 / clone 2)) (Mycoplasma gallisepticum).